A 335-amino-acid polypeptide reads, in one-letter code: Ubiquinone biosynthesis protein COQ4, mitochondrial (335 aa).

The transit peptide at 1–10 (MLRLSLLRST) directs the protein to the mitochondrion. Positions 210, 211, 214, and 226 each coordinate Zn(2+).

Belongs to the COQ4 family. As to quaternary structure, component of a multi-subunit COQ enzyme complex, composed of at least COQ3, COQ4, COQ5, COQ6, COQ7 and COQ9. Interacts with COQ3. It depends on Zn(2+) as a cofactor.

Its subcellular location is the mitochondrion inner membrane. The catalysed reaction is 4-hydroxy-3-methoxy-5-(all-trans-hexaprenyl)benzoate + H(+) = 2-methoxy-6-(all-trans-hexaprenyl)phenol + CO2. The protein operates within cofactor biosynthesis; ubiquinone biosynthesis. Its function is as follows. Lyase that catalyzes the C1-decarboxylation of 4-hydroxy-3-methoxy-5-(all-trans-hexaprenyl)benzoic acid into 2-methoxy-6-(all-trans-hexaprenyl)phenol during ubiquinone biosynthesis. This is Ubiquinone biosynthesis protein COQ4, mitochondrial from Saccharomyces cerevisiae (strain RM11-1a) (Baker's yeast).